The following is a 1100-amino-acid chain: Guanylate cyclase 2G (1100 aa).

An N-terminal signal peptide occupies residues 1–43 (MASRARSEPPLEHRFYGGAESHAGHSSLVLTLFVVMLMTCLEA). Topologically, residues 44-481 (AKLTVGFHAP…GAGMTASVTA (438 aa)) are extracellular. 5 N-linked (GlcNAc...) asparagine glycosylation sites follow: N55, N85, N94, N418, and N443. Residues 482–502 (VIPTVTLLVVASAAAITGLML) traverse the membrane as a helical segment. The Cytoplasmic segment spans residues 503–1100 (WRLRGKVQNH…EEEAKVPEIL (598 aa)). Positions 549 to 826 (STVKISADCG…PAFPSIKKTL (278 aa)) constitute a Protein kinase domain. The Guanylate cyclase domain maps to 901–1031 (TIFFSDIVGF…DTVNMASRME (131 aa)).

It belongs to the adenylyl cyclase class-4/guanylyl cyclase family. Homooligomer. May interact with NPR1/GC-A. Post-translationally, N-glycosylated. Expressed in lung, kidney and skeletal muscle. Low levels in intestine.

Its subcellular location is the cell membrane. It is found in the cytoplasm. It carries out the reaction GTP = 3',5'-cyclic GMP + diphosphate. This chain is Guanylate cyclase 2G (Gucy2g), found in Rattus norvegicus (Rat).